A 1385-amino-acid polypeptide reads, in one-letter code: DNA-directed RNA polymerase subunit beta' (1385 aa).

The Zn(2+) site is built by C72, C74, C87, and C90. Residues D467, D469, and D471 each contribute to the Mg(2+) site. Zn(2+) is bound by residues C829, C910, C917, and C920.

Belongs to the RNA polymerase beta' chain family. As to quaternary structure, the RNAP catalytic core consists of 2 alpha, 1 beta, 1 beta' and 1 omega subunit. When a sigma factor is associated with the core the holoenzyme is formed, which can initiate transcription. Requires Mg(2+) as cofactor. It depends on Zn(2+) as a cofactor.

The catalysed reaction is RNA(n) + a ribonucleoside 5'-triphosphate = RNA(n+1) + diphosphate. Its function is as follows. DNA-dependent RNA polymerase catalyzes the transcription of DNA into RNA using the four ribonucleoside triphosphates as substrates. In Elusimicrobium minutum (strain Pei191), this protein is DNA-directed RNA polymerase subunit beta'.